A 605-amino-acid polypeptide reads, in one-letter code: Probable potassium transport system protein Kup (605 aa).

Helical transmembrane passes span 18 to 38, 46 to 66, 97 to 117, 138 to 158, 169 to 189, 204 to 224, 247 to 267, 287 to 307, 339 to 359, 368 to 388, 395 to 415, and 418 to 438; these read GLVFGDIGTSPIYTLTVIIAL, ILGIISLIVWTLIILVHLEYA, MAFVTFLTYLGVALLMGDGVI, GLSQNTLILIAGTIALFLFVF, AFGPIMVLWFAALALSGAISV, AISFLMHNGLPGFFVLSEVIL, AWYFVFVALVINYLGQGAFII, FYIPFLILTILATIIASQALI, IYIGSVNWLLLCLVILIMLVF, AYGFAVTGTMVITGIMMTMIF, WKVPLALFVTLVDVVFLVSNC, and LPHGGYWSLILASVPLAVILI.

The protein belongs to the HAK/KUP transporter (TC 2.A.72) family.

The protein resides in the cell inner membrane. It carries out the reaction K(+)(in) + H(+)(in) = K(+)(out) + H(+)(out). Its function is as follows. Transport of potassium into the cell. Likely operates as a K(+):H(+) symporter. This Pelobacter propionicus (strain DSM 2379 / NBRC 103807 / OttBd1) protein is Probable potassium transport system protein Kup.